A 439-amino-acid chain; its full sequence is GTPase Obg (439 aa).

Residues 4-162 (IEFIDVVDIY…KHIQLELKLL (159 aa)) enclose the Obg domain. An OBG-type G domain is found at 163–336 (ADVGLIGYPN…LKYAMWDIIK (174 aa)). GTP contacts are provided by residues 169–176 (GYPNVGKS), 194–198 (FTTLV), 218–221 (DIPG), 288–291 (NKSD), and 317–319 (SAV). S176 and T196 together coordinate Mg(2+). One can recognise an OCT domain in the interval 361–439 (LVLPDRVDIK…VEGVDFIFKE (79 aa)).

The protein belongs to the TRAFAC class OBG-HflX-like GTPase superfamily. OBG GTPase family. As to quaternary structure, monomer. The cofactor is Mg(2+).

The protein resides in the cytoplasm. Functionally, an essential GTPase which binds GTP, GDP and possibly (p)ppGpp with moderate affinity, with high nucleotide exchange rates and a fairly low GTP hydrolysis rate. Plays a role in control of the cell cycle, stress response, ribosome biogenesis and in those bacteria that undergo differentiation, in morphogenesis control. The chain is GTPase Obg from Fervidobacterium nodosum (strain ATCC 35602 / DSM 5306 / Rt17-B1).